Reading from the N-terminus, the 167-residue chain is Regulator of sigma D (167 aa).

Belongs to the Rsd/AlgQ family. Interacts with RpoD.

The protein localises to the cytoplasm. Functionally, binds RpoD and negatively regulates RpoD-mediated transcription activation by preventing the interaction between the primary sigma factor RpoD with the catalytic core of the RNA polymerase and with promoter DNA. May be involved in replacement of the RNA polymerase sigma subunit from RpoD to RpoS during the transition from exponential growth to the stationary phase. The protein is Regulator of sigma D of Yersinia enterocolitica serotype O:8 / biotype 1B (strain NCTC 13174 / 8081).